A 691-amino-acid polypeptide reads, in one-letter code: MARAFPLERVRNIGIAAHIDAGKTTCTERILFYSGVVHKMGEVHDGAAVTDWMAQERERGITITAAAISTTWNDHRINIIDTPGHVDFTIEVERSMRVLDGVIAVFCAVGGVQPQSETVWRQADRYSVPRMVFVNKMDRTGADFLKVHGQIKNRLKANAIPIQLPIGAEGDLSGIIDLVKNKAFIYKDDLGKEIEETEIPDHMKEIAAEWRSKLMECVAETDEELIEVFLETEELSEAQLASGIREGVLNHGLVPLLCGSAFKNKGVQLLLDAVVDYLPAPVDVPPIQGLLPNGKEAVRPSDDNAPFSALAFKVMSDPYGKLTFVRMYSGVLEKGSYVLNSTKNEKERISRLIILKADDREEVDALRAGDLGAVLGLKNTTTGDTLCTTDDPIVLETLYIPEPVISVAVEPKTKGDMEKLSKALLSLAEEDPTFRVSTDPETSQTVIAGMGELHLEILVDRMLREFKVEANIGAPQVSYRETIRASSKGEGKFARQTGGKGQYGHVVIEMEPGEPGSGFEFVNKIVGGIVPKEYIKPAESGMRETCESGVIAGYPLIDVKVTMVDGSYHDVDSSEMAFKIAGSMAFKDGVKKCNPVLLEPMMKVEVEIPEDFLGAIIGDLSSRRGQVEGQSIDDGLSKVQSKVPLAEMFGYATQLRSMTQGRGIFSMEFSHYEEVPRNVAEAIISKNQGNS.

The region spanning 8-282 (ERVRNIGIAA…AVVDYLPAPV (275 aa)) is the tr-type G domain. GTP is bound by residues 17-24 (AHIDAGKT), 81-85 (DTPGH), and 135-138 (NKMD).

Belongs to the TRAFAC class translation factor GTPase superfamily. Classic translation factor GTPase family. EF-G/EF-2 subfamily.

The protein localises to the cytoplasm. In terms of biological role, catalyzes the GTP-dependent ribosomal translocation step during translation elongation. During this step, the ribosome changes from the pre-translocational (PRE) to the post-translocational (POST) state as the newly formed A-site-bound peptidyl-tRNA and P-site-bound deacylated tRNA move to the P and E sites, respectively. Catalyzes the coordinated movement of the two tRNA molecules, the mRNA and conformational changes in the ribosome. The polypeptide is Elongation factor G (Prochlorococcus marinus (strain MIT 9313)).